We begin with the raw amino-acid sequence, 132 residues long: NLP effector protein 15 (132 aa).

The short motif at 1–9 is the Conserved undecapeptide motif I element; it reads MYSWYFPKD. Positions 16–22 match the Hepta-peptide GHRHDWE motif II motif; it reads GHRHDWE.

It belongs to the Necrosis inducing protein (NPP1) family.

Its subcellular location is the secreted. Its function is as follows. Secreted effector that contributes moderately to virulence during infection by P.capsici. Causes only small yellow areas at 3 days after inoculation of host C.annuum leaves; these areas expand somewhat and became necrotic at 7 days after inoculation. Leads only to chlorotic areas, without necrosis at 7 days after non-host N.benthamiana leaves infection. The polypeptide is NLP effector protein 15 (Phytophthora capsici).